Consider the following 65-residue polypeptide: VVYTDCTESGQNLCLCEDSNVCGQGNKCILGSNGEKNQCVTGEGTPKPQSHNDGDFEEIPEEYLQ.

An interaction with thrombin active site region spans residues 1-3; sequence VVY. 3 disulfides stabilise this stretch: Cys6-Cys14, Cys16-Cys28, and Cys22-Cys39. Residues 39–65 form a disordered region; sequence CVTGEGTPKPQSHNDGDFEEIPEEYLQ. O-linked (GalNAc...) threonine glycosylation occurs at Thr45. Positions 55–65 are interaction with fibrinogen-binding exosite of thrombin; the sequence is DFEEIPEEYLQ. A compositionally biased stretch (acidic residues) spans 55–65; that stretch reads DFEEIPEEYLQ. Residue Tyr63 is modified to Sulfotyrosine.

It belongs to the protease inhibitor I14 (hirudin) family.

It localises to the secreted. Hirudin is a potent thrombin-specific protease inhibitor. It forms a stable non-covalent complex with alpha-thrombin, thereby abolishing its ability to cleave fibrinogen. This is Hirudin-3 from Hirudo medicinalis (Medicinal leech).